The following is a 215-amino-acid chain: Probable cutinase 3 (215 aa).

A signal peptide spans 1-17 (MHFRALLVSALATLAMA). 2 cysteine pairs are disulfide-bonded: C39/C118 and C65/C79. The Nucleophile role is filled by S129. C180 and C187 are disulfide-bonded. Residue D184 is part of the active site. H197 functions as the Proton donor/acceptor in the catalytic mechanism.

The protein belongs to the cutinase family.

It is found in the secreted. It carries out the reaction cutin + H2O = cutin monomers.. Catalyzes the hydrolysis of complex carboxylic polyesters found in the cell wall of plants. Degrades cutin, a macromolecule that forms the structure of the plant cuticle. The polypeptide is Probable cutinase 3 (Aspergillus clavatus (strain ATCC 1007 / CBS 513.65 / DSM 816 / NCTC 3887 / NRRL 1 / QM 1276 / 107)).